The sequence spans 299 residues: Cytidine deaminase (299 aa).

CMP/dCMP-type deaminase domains lie at 56–176 and 194–299; these read SKIE…FGPK and LQGD…YIAV. 97–99 contributes to the substrate binding site; that stretch reads NQE. H110 provides a ligand contact to Zn(2+). E112 serves as the catalytic Proton donor. Residues C137 and C140 each coordinate Zn(2+).

This sequence belongs to the cytidine and deoxycytidylate deaminase family. As to quaternary structure, homodimer. Zn(2+) is required as a cofactor.

It catalyses the reaction cytidine + H2O + H(+) = uridine + NH4(+). It carries out the reaction 2'-deoxycytidine + H2O + H(+) = 2'-deoxyuridine + NH4(+). This enzyme scavenges exogenous and endogenous cytidine and 2'-deoxycytidine for UMP synthesis. This Haemophilus ducreyi (strain 35000HP / ATCC 700724) protein is Cytidine deaminase.